The chain runs to 347 residues: MSGLVCYCRQGFEPELAAELSARAAFVGIAGYARTQRNDGYVLFVCDEAAQLAAKLQWRELIFARQKLVVIAELKGIDPKDRITPILAALDGHQRFGDLWVEHPDSDAGKPLAGLARSFGNALRPALRKAGLLTDKPQLRQPRLHVCFLDGDHAVLAVADNADSAPWPLGIPRLKLLPEAPSRSALKLDEALLTLLTPEERDALVKPGMRAADLGAAPGGWTWVLTRQHVHVTSVDNGPLREHVLETGLVEHLRADGFHWKPAQPLDWMVCDMVEQPRRVAERMATWVREGWCRNTIFNLKLPMKKRWDETRLCLDLFEQQAEKSLIVRAKQLYHDREEITVLAMRE.

S-adenosyl-L-methionine-binding positions include Ser-184, 217–220, Asp-236, Asp-256, and Asp-272; that span reads APGG. The active-site Proton acceptor is the Lys-301.

It belongs to the class I-like SAM-binding methyltransferase superfamily. RNA methyltransferase RlmE family. RlmM subfamily. Monomer.

It localises to the cytoplasm. The enzyme catalyses cytidine(2498) in 23S rRNA + S-adenosyl-L-methionine = 2'-O-methylcytidine(2498) in 23S rRNA + S-adenosyl-L-homocysteine + H(+). Functionally, catalyzes the 2'-O-methylation at nucleotide C2498 in 23S rRNA. This chain is Ribosomal RNA large subunit methyltransferase M, found in Xanthomonas euvesicatoria pv. vesicatoria (strain 85-10) (Xanthomonas campestris pv. vesicatoria).